Consider the following 457-residue polypeptide: 3-ketoacyl-CoA thiolase 5, peroxisomal (457 aa).

The transit peptide at 1–37 directs the protein to the peroxisome; the sequence is MERAMERQKILLRHLNPVSSSNSSLKHEPSLLSPVNC. Cysteine 137 (acyl-thioester intermediate) is an active-site residue. Catalysis depends on proton acceptor residues histidine 394 and cysteine 426.

Belongs to the thiolase-like superfamily. Thiolase family. As to quaternary structure, homodimer. Expressed in seedlings and wounded leaves.

It is found in the peroxisome. It catalyses the reaction an acyl-CoA + acetyl-CoA = a 3-oxoacyl-CoA + CoA. Its pathway is lipid metabolism; fatty acid metabolism. Probably involved in long chain fatty-acid beta-oxidation prior to gluconeogenesis during germination and subsequent seedling growth. Involved in systemic jasmonic acid (JA) biosynthesis after wounding and may be during senescence. This chain is 3-ketoacyl-CoA thiolase 5, peroxisomal (KAT5), found in Arabidopsis thaliana (Mouse-ear cress).